The sequence spans 156 residues: 6,7-dimethyl-8-ribityllumazine synthase (156 aa).

5-amino-6-(D-ribitylamino)uracil contacts are provided by residues Phe28, 62–64 (ALE), and 86–88 (AVI). 91–92 (ET) serves as a coordination point for (2S)-2-hydroxy-3-oxobutyl phosphate. The active-site Proton donor is His94. Asn119 contacts 5-amino-6-(D-ribitylamino)uracil. Arg133 contributes to the (2S)-2-hydroxy-3-oxobutyl phosphate binding site.

It belongs to the DMRL synthase family.

The catalysed reaction is (2S)-2-hydroxy-3-oxobutyl phosphate + 5-amino-6-(D-ribitylamino)uracil = 6,7-dimethyl-8-(1-D-ribityl)lumazine + phosphate + 2 H2O + H(+). It functions in the pathway cofactor biosynthesis; riboflavin biosynthesis; riboflavin from 2-hydroxy-3-oxobutyl phosphate and 5-amino-6-(D-ribitylamino)uracil: step 1/2. In terms of biological role, catalyzes the formation of 6,7-dimethyl-8-ribityllumazine by condensation of 5-amino-6-(D-ribitylamino)uracil with 3,4-dihydroxy-2-butanone 4-phosphate. This is the penultimate step in the biosynthesis of riboflavin. This is 6,7-dimethyl-8-ribityllumazine synthase from Azoarcus sp. (strain BH72).